Here is a 339-residue protein sequence, read N- to C-terminus: Dihydroorotase (339 aa).

Zn(2+)-binding residues include His-12 and His-14. Substrate-binding positions include 14 to 16 (HVR) and Asn-40. Zn(2+) contacts are provided by Lys-94, His-133, His-167, and Asp-239. Lys-94 is subject to N6-carboxylysine. His-133 lines the substrate pocket. Asp-239 is an active-site residue. Residues His-243 and Ala-255 each coordinate substrate.

This sequence belongs to the metallo-dependent hydrolases superfamily. DHOase family. Class II DHOase subfamily. In terms of assembly, homodimer. Requires Zn(2+) as cofactor.

The enzyme catalyses (S)-dihydroorotate + H2O = N-carbamoyl-L-aspartate + H(+). The protein operates within pyrimidine metabolism; UMP biosynthesis via de novo pathway; (S)-dihydroorotate from bicarbonate: step 3/3. Its function is as follows. Catalyzes the reversible cyclization of carbamoyl aspartate to dihydroorotate. The polypeptide is Dihydroorotase (Helicobacter pylori (strain J99 / ATCC 700824) (Campylobacter pylori J99)).